The chain runs to 471 residues: 5-hydroxytryptamine receptor 2A (471 aa).

Residues 1-80 (MDILCEENTS…LQEKNWSALL (80 aa)) lie on the Extracellular side of the membrane. N38 carries N-linked (GlcNAc...) asparagine glycosylation. A helical membrane pass occupies residues 81 to 97 (TAVVIILTIAGNILVIM). At 98–111 (AVSLEKKLQNATNY) the chain is on the cytoplasmic side. Residues 112 to 137 (FLMSLAIADMLLGFLVMPVSMLTILY) form a helical membrane-spanning segment. Topologically, residues 138–146 (GYRWPLPSK) are extracellular. Residues 147–171 (LCAVWIYLDVLFSTASIMHLCAISL) form a helical membrane-spanning segment. C148 and C227 are disulfide-bonded. A serotonin-binding site is contributed by D155. The DRY motif; important for ligand-induced conformation changes signature appears at 172-174 (DRY). Topologically, residues 172 to 191 (DRYVAIQNPIHHSRFNSRTK) are cytoplasmic. The chain crosses the membrane as a helical span at residues 192–215 (AFLKIIAVWTISVGISMPIPVFGL). The Extracellular portion of the chain corresponds to 216–232 (QDDSKVFKEGSCLLADD). Residues 233-258 (NFVLIGSFVSFFIPLTIMVITYFLTI) traverse the membrane as a helical segment. Residues 259–322 (KSLQKEATLC…QSISNEQKAC (64 aa)) lie on the Cytoplasmic side of the membrane. S280 is modified (phosphoserine). A helical transmembrane segment spans residues 323–348 (KVLGIVFSLFVVMWCPFFITNIMAVI). Position 343 (N343) interacts with serotonin. An intrachain disulfide couples C349 to C353. Residues 349 to 356 (CKESCNED) lie on the Extracellular side of the membrane. The helical transmembrane segment at 357–382 (VIGALLNVFVWIGYLSSAVNPLVYTL) threads the bilayer. Residues 376-380 (NPLVY) carry the NPxxY motif; important for ligand-induced conformation changes and signaling motif. Topologically, residues 383-471 (FNKTYRSAFS…DGVNEKVSCV (89 aa)) are cytoplasmic. Residues 450–471 (KQHSEDASKDNSDGVNEKVSCV) form a disordered region. Basic and acidic residues predominate over residues 451–465 (QHSEDASKDNSDGVN). The short motif at 469–471 (SCV) is the PDZ-binding element.

It belongs to the G-protein coupled receptor 1 family. Interacts (via C-terminus) with MPDZ and PATJ. May interact (via C-terminus) with MPP3, PRDX6, DLG4, DLG1, CASK, APBA1 and MAGI2. Interacts with GRM2 and DRD2; this may affect signaling.

It localises to the cell membrane. Its subcellular location is the cell projection. The protein resides in the dendrite. The protein localises to the axon. It is found in the cytoplasmic vesicle. It localises to the membrane. Its subcellular location is the caveola. The protein resides in the presynapse. With respect to regulation, G-protein coupled receptor activity is regulated by lipids: oleamide increases HTR2A-mediated activity. Functionally, G-protein coupled receptor for 5-hydroxytryptamine (serotonin). Also functions as a receptor for various drugs and psychoactive substances, including mescaline, psilocybin, 1-(2,5-dimethoxy-4-iodophenyl)-2-aminopropane (DOI) and lysergic acid diethylamide (LSD). Ligand binding causes a conformation change that triggers signaling via guanine nucleotide-binding proteins (G proteins) and modulates the activity of downstream effectors. HTR2A is coupled to G(q)/G(11) G alpha proteins and activates phospholipase C-beta, releasing diacylglycerol (DAG) and inositol 1,4,5-trisphosphate (IP3) second messengers that modulate the activity of phosphatidylinositol 3-kinase and promote the release of Ca(2+) ions from intracellular stores, respectively. Beta-arrestin family members inhibit signaling via G proteins and mediate activation of alternative signaling pathways. Affects neural activity, perception, cognition and mood. Plays a role in the regulation of behavior, including responses to anxiogenic situations and psychoactive substances. Plays a role in intestinal smooth muscle contraction, and may play a role in arterial vasoconstriction. This chain is 5-hydroxytryptamine receptor 2A (HTR2A), found in Pongo pygmaeus (Bornean orangutan).